The following is a 338-amino-acid chain: Anthranilate phosphoribosyltransferase (338 aa).

5-phospho-alpha-D-ribose 1-diphosphate-binding positions include G81, G84–D85, S89, N91–T94, K109–S117, and A121. G81 contributes to the anthranilate binding site. Residue S93 participates in Mg(2+) binding. Anthranilate is bound at residue N112. R167 lines the anthranilate pocket. D226 and E227 together coordinate Mg(2+).

Belongs to the anthranilate phosphoribosyltransferase family. As to quaternary structure, homodimer. It depends on Mg(2+) as a cofactor.

The enzyme catalyses N-(5-phospho-beta-D-ribosyl)anthranilate + diphosphate = 5-phospho-alpha-D-ribose 1-diphosphate + anthranilate. It functions in the pathway amino-acid biosynthesis; L-tryptophan biosynthesis; L-tryptophan from chorismate: step 2/5. Functionally, catalyzes the transfer of the phosphoribosyl group of 5-phosphorylribose-1-pyrophosphate (PRPP) to anthranilate to yield N-(5'-phosphoribosyl)-anthranilate (PRA). This Rhodopseudomonas palustris (strain BisB5) protein is Anthranilate phosphoribosyltransferase.